Consider the following 469-residue polypeptide: Glutamate--tRNA ligase (469 aa).

The 'HIGH' region signature appears at 9-19 (PSPTGFLHVGG). The Zn(2+) site is built by Cys-98, Cys-100, Cys-125, and Asp-127. Residues 236-240 (KLSKR) carry the 'KMSKS' region motif. Lys-239 provides a ligand contact to ATP.

It belongs to the class-I aminoacyl-tRNA synthetase family. Glutamate--tRNA ligase type 1 subfamily. Monomer. Zn(2+) is required as a cofactor.

The protein resides in the cytoplasm. The enzyme catalyses tRNA(Glu) + L-glutamate + ATP = L-glutamyl-tRNA(Glu) + AMP + diphosphate. Its function is as follows. Catalyzes the attachment of glutamate to tRNA(Glu) in a two-step reaction: glutamate is first activated by ATP to form Glu-AMP and then transferred to the acceptor end of tRNA(Glu). The protein is Glutamate--tRNA ligase of Shewanella sp. (strain ANA-3).